We begin with the raw amino-acid sequence, 232 residues long: MPHSPCLLWLLAVTSLVPGTQPLVAGDLEGDELDETPLPAVPCDYDHCRHLQVPCQELQRAGPAACLCPGLSSALQPPHPPRLGEVRVEADMGRAEVHWCAPSSPVNQYWLLLWEGGGAPQKGPSFNSTVRRAELKGLNPGGAYVVCVVAANDAGESRAPGPGAEGLDSADGPNLGPCGRLTVPPRPLTLLHAAMGVGSALALLSCSALVWHFCLRQRWGCPRRGRPSHAGL.

Positions 1 to 22 are cleaved as a signal peptide; that stretch reads MPHSPCLLWLLAVTSLVPGTQP. At 23-189 the chain is on the extracellular side; it reads LVAGDLEGDE…RLTVPPRPLT (167 aa). One can recognise a Fibronectin type-III domain in the interval 77 to 172; that stretch reads PPHPPRLGEV…GAEGLDSADG (96 aa). Residue Asn127 is glycosylated (N-linked (GlcNAc...) asparagine). The helical transmembrane segment at 190–210 threads the bilayer; the sequence is LLHAAMGVGSALALLSCSALV. The Cytoplasmic portion of the chain corresponds to 211–232; that stretch reads WHFCLRQRWGCPRRGRPSHAGL.

The protein localises to the membrane. This Bos taurus (Bovine) protein is LRRN4 C-terminal-like protein (LRRN4CL).